Reading from the N-terminus, the 331-residue chain is (+)-aristolochene synthase TS1 (331 aa).

The interval 1 to 22 (MTRMKNSSSNVTSASGSGSGSG) is disordered. Low complexity predominate over residues 7 to 16 (SSSNVTSASG). Mg(2+) contacts are provided by Asp102, Asn231, Ser235, and Glu239. The short motif at 102 to 106 (DDLLE) is the DDxx(x)D/E motif element. The NDxxSxxxD/E motif signature appears at 231-239 (NDVYSYEKE). (2E,6E)-farnesyl diphosphate-binding residues include Arg326 and Tyr327.

This sequence belongs to the terpene synthase family. In terms of assembly, homodimer. It depends on Mg(2+) as a cofactor.

The catalysed reaction is (2E,6E)-farnesyl diphosphate = (+)-aristolochene + diphosphate. The protein operates within sesquiterpene biosynthesis; aristolochene biosynthesis; aristolochene from farnesyl diphosphate: step 1/1. Its function is as follows. Catalyzes the cyclization of trans,trans-farnesyl diphosphate (FPP) to the bicyclic sesquiterpene aristolochene. Aristolochene is the likely parent compound for a number of sesquiterpenoid toxins produced by filamentous fungi. In Penicillium expansum (Blue mold rot fungus), this protein is (+)-aristolochene synthase TS1.